Consider the following 299-residue polypeptide: Coenzyme PQQ synthesis protein B (299 aa).

The protein belongs to the PqqB family.

It functions in the pathway cofactor biosynthesis; pyrroloquinoline quinone biosynthesis. Its function is as follows. May be involved in the transport of PQQ or its precursor to the periplasm. The sequence is that of Coenzyme PQQ synthesis protein B from Xanthomonas axonopodis pv. citri (strain 306).